The following is a 299-amino-acid chain: Coenzyme PQQ synthesis protein B (299 aa).

Belongs to the PqqB family.

It functions in the pathway cofactor biosynthesis; pyrroloquinoline quinone biosynthesis. May be involved in the transport of PQQ or its precursor to the periplasm. In Methylorubrum extorquens (strain PA1) (Methylobacterium extorquens), this protein is Coenzyme PQQ synthesis protein B.